We begin with the raw amino-acid sequence, 272 residues long: 3-methyl-2-oxobutanoate hydroxymethyltransferase (272 aa).

The Mg(2+) site is built by aspartate 51 and aspartate 90. 3-methyl-2-oxobutanoate-binding positions include 51 to 52 (DS), aspartate 90, and lysine 118. Position 120 (glutamate 120) interacts with Mg(2+). Residue glutamate 187 is the Proton acceptor of the active site.

It belongs to the PanB family. Homodecamer; pentamer of dimers. Mg(2+) serves as cofactor.

It localises to the cytoplasm. It carries out the reaction 3-methyl-2-oxobutanoate + (6R)-5,10-methylene-5,6,7,8-tetrahydrofolate + H2O = 2-dehydropantoate + (6S)-5,6,7,8-tetrahydrofolate. The protein operates within cofactor biosynthesis; (R)-pantothenate biosynthesis; (R)-pantoate from 3-methyl-2-oxobutanoate: step 1/2. Its function is as follows. Catalyzes the reversible reaction in which hydroxymethyl group from 5,10-methylenetetrahydrofolate is transferred onto alpha-ketoisovalerate to form ketopantoate. The polypeptide is 3-methyl-2-oxobutanoate hydroxymethyltransferase (Xylella fastidiosa (strain 9a5c)).